A 156-amino-acid chain; its full sequence is Transcriptional repressor NrdR (156 aa).

A zinc finger lies at 3-34 (CPFCGNVDTQVKDSRPAEDHVAIRRRRFCPAC). The 91-residue stretch at 49–139 (LVVIKSNGKR…VYKNFQATGD (91 aa)) folds into the ATP-cone domain.

The protein belongs to the NrdR family. Zn(2+) serves as cofactor.

Its function is as follows. Negatively regulates transcription of bacterial ribonucleotide reductase nrd genes and operons by binding to NrdR-boxes. This Jannaschia sp. (strain CCS1) protein is Transcriptional repressor NrdR.